Reading from the N-terminus, the 872-residue chain is Leucine--tRNA ligase (872 aa).

The 'HIGH' region signature appears at 42–52 (PYPSGSLHMGH). The 'KMSKS' region motif lies at 634–638 (TMSKS). Lys-637 is an ATP binding site.

The protein belongs to the class-I aminoacyl-tRNA synthetase family.

It localises to the cytoplasm. It carries out the reaction tRNA(Leu) + L-leucine + ATP = L-leucyl-tRNA(Leu) + AMP + diphosphate. The sequence is that of Leucine--tRNA ligase from Nostoc sp. (strain PCC 7120 / SAG 25.82 / UTEX 2576).